Reading from the N-terminus, the 1492-residue chain is Neogenin (1492 aa).

Residues 1–36 form the signal peptide; it reads MAAEREAGRLLCTSSSRRCCPPPPLLLLLPLLLLLG. The Extracellular segment spans residues 37–1136; sequence RPASGAAATK…PTSPLDSNML (1100 aa). Ig-like C2-type domains are found at residues 63–158, 163–249, 254–347, and 352–437; these read PFYF…AKLT, PRFT…AELK, PEEI…AELT, and PGFL…AQLI. A glycan (N-linked (GlcNAc...) asparagine) is linked at Asn-84. 3 disulfides stabilise this stretch: Cys-85–Cys-140, Cys-184–Cys-232, and Cys-281–Cys-331. A glycan (N-linked (GlcNAc...) asparagine) is linked at Asn-221. N-linked (GlcNAc...) asparagine glycosylation occurs at Asn-337. Cys-373 and Cys-421 form a disulfide bridge. 6 Fibronectin type-III domains span residues 472–566, 572–662, 667–762, 772–862, 887–986, and 988–1085; these read APRD…TQPE, PAPN…TLSD, APQN…TFES, VPSS…RPHT, PPVG…LVPT, and PPKD…TPKA. 2 N-linked (GlcNAc...) asparagine glycosylation sites follow: Asn-501 and Asn-520. N-linked (GlcNAc...) asparagine glycosylation is found at Asn-670 and Asn-746. Asn-940 is a glycosylation site (N-linked (GlcNAc...) asparagine). Residues 1072–1128 are disordered; the sequence is GPMSEAVQFRTPKADSSDKMPNDQALGSAGKGSRLPDLGSDYKPPMSGSNSPHGSPT. Over residues 1083 to 1092 the composition is skewed to basic and acidic residues; sequence PKADSSDKMP. Residues 1118 to 1128 show a composition bias toward polar residues; it reads SGSNSPHGSPT. The helical transmembrane segment at 1137-1157 threads the bilayer; that stretch reads LVIIVSVGVITIVVVVVIAVF. Residues 1158 to 1492 are Cytoplasmic-facing; the sequence is CTRRTTSHQK…MKDLNAITTA (335 aa). Disordered stretches follow at residues 1205-1237, 1266-1300, and 1321-1396; these read PIDKSPDPNPVMTDTPIPRNSQDITPVDNSMDS, PKMMMPFDSQPPQPVISAHPIHSLDNPHHHFHSSS, and SMSL…FAVP. Ser-1209 and Ser-1225 each carry phosphoserine. Positions 1222 to 1237 are enriched in polar residues; that stretch reads PRNSQDITPVDNSMDS. A Phosphothreonine modification is found at Thr-1229. Polar residues-rich tracts occupy residues 1321–1353 and 1361–1380; these read SMSLSDRANSTESVRNTPSTDTMPASSSQTCCT and ATSSSYLASSQEEDSGQSLP. At Ser-1432 the chain carries Phosphoserine. Thr-1435 carries the post-translational modification Phosphothreonine. 3 positions are modified to phosphoserine: Ser-1463, Ser-1465, and Ser-1466.

This sequence belongs to the immunoglobulin superfamily. DCC family. Interacts with BMP2, BMP4, BMP6, and BMP7. Interacts with RGMA and RGMB. Interacts with MYO10. As to expression, widely expressed.

It localises to the cell membrane. Its function is as follows. Multi-functional cell surface receptor regulating cell adhesion in many diverse developmental processes, including neural tube and mammary gland formation, myogenesis and angiogenesis. Receptor for members of the BMP, netrin, and repulsive guidance molecule (RGM) families. Netrin-Neogenin interactions result in a chemoattractive axon guidance response and cell-cell adhesion, the interaction between NEO1/Neogenin and RGMa and RGMb induces a chemorepulsive response. In Mus musculus (Mouse), this protein is Neogenin.